The chain runs to 312 residues: Ribosomal RNA small subunit methyltransferase H (312 aa).

Residues 34 to 36 (AGH), aspartate 54, phenylalanine 81, aspartate 102, and glutamine 109 contribute to the S-adenosyl-L-methionine site.

It belongs to the methyltransferase superfamily. RsmH family.

It localises to the cytoplasm. The catalysed reaction is cytidine(1402) in 16S rRNA + S-adenosyl-L-methionine = N(4)-methylcytidine(1402) in 16S rRNA + S-adenosyl-L-homocysteine + H(+). Its function is as follows. Specifically methylates the N4 position of cytidine in position 1402 (C1402) of 16S rRNA. The sequence is that of Ribosomal RNA small subunit methyltransferase H from Citrifermentans bemidjiense (strain ATCC BAA-1014 / DSM 16622 / JCM 12645 / Bem) (Geobacter bemidjiensis).